We begin with the raw amino-acid sequence, 516 residues long: Probable D,D-dipeptide-binding periplasmic protein DdpA (516 aa).

An N-terminal signal peptide occupies residues 1–25; sequence MKRSISFRPTLLALVLATNFPVAHA.

It belongs to the bacterial solute-binding protein 5 family. As to quaternary structure, the complex is composed of two ATP-binding proteins (DdpD and DdpF), two transmembrane proteins (DdpB and DdpC) and a solute-binding protein (DdpA).

Its subcellular location is the periplasm. In terms of biological role, part of the ABC transporter complex DdpABCDF, which is probably involved in D,D-dipeptide transport. In Escherichia coli (strain K12), this protein is Probable D,D-dipeptide-binding periplasmic protein DdpA (ddpA).